A 564-amino-acid chain; its full sequence is Multidrug resistance protein 1 (564 aa).

The Cytoplasmic segment spans residues 1 to 115 (MHYRFLRDSF…NPQNWPTLQK (115 aa)). Residues 60 to 101 (IDNQGEPNSSQSSSSNNTIVDNNNNNDNDVDGDKIVVTWDGD) form a disordered region. Over residues 67-86 (NSSQSSSSNNTIVDNNNNND) the composition is skewed to low complexity. Residues 116 to 136 (AFFIFQISFLTTSVYMGSAVY) form a helical membrane-spanning segment. Topologically, residues 137 to 151 (TPGIEELMHDFGIGR) are extracellular. The chain crosses the membrane as a helical span at residues 152 to 172 (VVATLPLTLFVIGYGVGPLVF). Residues 173-183 (SPMSENAIFGR) are Cytoplasmic-facing. Residues 184-204 (TSIYIITLFLFVILQIPTALV) form a helical membrane-spanning segment. The Extracellular portion of the chain corresponds to 205–206 (NN). Residues 207–227 (IAGLCILRFLGGFFASPCLAT) traverse the membrane as a helical segment. Residues 228–242 (GGASVADVVKFWNLP) are Cytoplasmic-facing. A helical membrane pass occupies residues 243-263 (VGLAAWSLGAVCGPSFGPFFG). Residues 264–273 (SILTVKASWR) lie on the Extracellular side of the membrane. The helical transmembrane segment at 274–294 (WTFWFMCIISGFSFVMLCFTL) threads the bilayer. The Cytoplasmic portion of the chain corresponds to 295-350 (PETFGKTLLYRKAKRLRAITGNDRITSEGEVENSKMTSHELIIDTLWRPLEITVME). The chain crosses the membrane as a helical span at residues 351 to 371 (PVVLLINIYIAMVYSILYLFF). At 372–390 (EVFPIYFVGVKHFTLVELG) the chain is on the extracellular side. The chain crosses the membrane as a helical span at residues 391 to 411 (TTYMSIVIGIVIAAFIYIPVI). Residues 412–428 (RQKFTKPILRQEQVFPE) lie on the Cytoplasmic side of the membrane. A helical membrane pass occupies residues 429–449 (VFIPIAIVGGILLTSGLFIFG). Topologically, residues 450-455 (WSANRT) are extracellular. N-linked (GlcNAc...) asparagine glycosylation occurs at Asn453. The chain crosses the membrane as a helical span at residues 456 to 476 (THWVGPLFGAATTASGAFLIF). At 477–503 (QTLFNFMGASFKPHYIASVFASNDLFR) the chain is on the cytoplasmic side. The helical transmembrane segment at 504–524 (SVIASVFPLFGAPLFDNLATP) threads the bilayer. At 525-528 (EYPV) the chain is on the extracellular side. A helical membrane pass occupies residues 529-549 (AWGSSVLGFITLVMIAIPVLF). The Cytoplasmic segment spans residues 550–564 (YLNGPKLRARSKYAN).

The protein belongs to the major facilitator superfamily. CAR1 family.

It localises to the cell membrane. Its function is as follows. Plasma membrane multidrug efflux pump that confers resistance to numerous chemicals including azoles such as fluconazole, voriconazole, and benztriazoles, as well as to benomyl, cycloheximide, methotrexate, 4-nitroquinoline-N-oxide, sulfometuron methyl, cerulenin, and brefeldin A. This is Multidrug resistance protein 1 from Candida albicans (strain SC5314 / ATCC MYA-2876) (Yeast).